Consider the following 173-residue polypeptide: Bursicon (173 aa).

An N-terminal signal peptide occupies residues 1–32; the sequence is MLRHLLRHENNKVFVLILLYCVLVSILKLCTA. 5 disulfides stabilise this stretch: cysteine 52–cysteine 101, cysteine 66–cysteine 115, cysteine 76–cysteine 136, cysteine 80–cysteine 138, and cysteine 98–cysteine 141. A CTCK domain is found at 52–142; it reads CQVTPVIHVL…PLECMCRPCT (91 aa).

In terms of assembly, heterodimer of Burs and Pburs. As to expression, expressed in one to two pairs of neurons in each of the thoracic and abdominal neuromeres of the larval CNS. Coexpressed with CCAP in most CCAP-specific neurons. Coexpressed with Pburs in four bilateral neurons in thoracic and abdominal neuromeres of the ventral nervous system.

Its subcellular location is the secreted. Final heterodimeric neurohormone released at the end of the molting cycle, involved in the sclerotization (tanning) of the insect cuticle, melanization and wing spreading. Heterodimer specifically activates the G protein-coupled receptor rk. The sequence is that of Bursicon from Drosophila melanogaster (Fruit fly).